A 105-amino-acid polypeptide reads, in one-letter code: Met repressor (105 aa).

The protein belongs to the MetJ family. Homodimer.

The protein resides in the cytoplasm. Functionally, this regulatory protein, when combined with SAM (S-adenosylmethionine) represses the expression of the methionine regulon and of enzymes involved in SAM synthesis. The sequence is that of Met repressor from Actinobacillus succinogenes (strain ATCC 55618 / DSM 22257 / CCUG 43843 / 130Z).